The following is an 87-amino-acid chain: Small ribosomal subunit protein bS18 (87 aa).

The span at 1-10 (MAGKSSGDRR) shows a compositional bias: basic and acidic residues. The disordered stretch occupies residues 1-23 (MAGKSSGDRRKLLRGAKVGKNAA).

It belongs to the bacterial ribosomal protein bS18 family. Part of the 30S ribosomal subunit. Forms a tight heterodimer with protein bS6.

Functionally, binds as a heterodimer with protein bS6 to the central domain of the 16S rRNA, where it helps stabilize the platform of the 30S subunit. This Clavibacter sepedonicus (Clavibacter michiganensis subsp. sepedonicus) protein is Small ribosomal subunit protein bS18.